Here is a 444-residue protein sequence, read N- to C-terminus: Na(+)-translocating NADH-quinone reductase subunit A (444 aa).

The protein belongs to the NqrA family. In terms of assembly, composed of six subunits; NqrA, NqrB, NqrC, NqrD, NqrE and NqrF.

The catalysed reaction is a ubiquinone + n Na(+)(in) + NADH + H(+) = a ubiquinol + n Na(+)(out) + NAD(+). NQR complex catalyzes the reduction of ubiquinone-1 to ubiquinol by two successive reactions, coupled with the transport of Na(+) ions from the cytoplasm to the periplasm. NqrA to NqrE are probably involved in the second step, the conversion of ubisemiquinone to ubiquinol. In Shewanella denitrificans (strain OS217 / ATCC BAA-1090 / DSM 15013), this protein is Na(+)-translocating NADH-quinone reductase subunit A.